The sequence spans 209 residues: Imidazoleglycerol-phosphate dehydratase (209 aa).

The protein belongs to the imidazoleglycerol-phosphate dehydratase family.

It localises to the cytoplasm. It carries out the reaction D-erythro-1-(imidazol-4-yl)glycerol 3-phosphate = 3-(imidazol-4-yl)-2-oxopropyl phosphate + H2O. The protein operates within amino-acid biosynthesis; L-histidine biosynthesis; L-histidine from 5-phospho-alpha-D-ribose 1-diphosphate: step 6/9. The protein is Imidazoleglycerol-phosphate dehydratase of Microcystis aeruginosa (strain NIES-843 / IAM M-2473).